Consider the following 197-residue polypeptide: Phospholipid hydroperoxide glutathione peroxidase (197 aa).

Serine 40 is modified (phosphoserine). Residue selenocysteine 73 is part of the active site. A non-standard amino acid (selenocysteine) is located at residue selenocysteine 73.

The protein belongs to the glutathione peroxidase family. As to quaternary structure, monomer. Has a tendency to form higher mass oligomers. Interacts with FUNDC1; this interaction promotes GPX4 recruitment into mitochondria through TOM/TIM complex where it is degraded by mitophagy. In terms of tissue distribution, expressed very intensively in the testis and weakly in lung, heart, and cerebellum.

The protein localises to the mitochondrion. It localises to the cytoplasm. The enzyme catalyses a hydroperoxy polyunsaturated fatty acid + 2 glutathione = a hydroxy polyunsaturated fatty acid + glutathione disulfide + H2O. The catalysed reaction is 2 glutathione + H2O2 = glutathione disulfide + 2 H2O. It carries out the reaction tert-butyl hydroperoxide + 2 glutathione = tert-butanol + glutathione disulfide + H2O. It catalyses the reaction cumene hydroperoxide + 2 glutathione = 2-phenylpropan-2-ol + glutathione disulfide + H2O. The enzyme catalyses (9S)-hydroperoxy-(10E,12Z)-octadecadienoate + 2 glutathione = (9S)-hydroxy-(10E,12Z)-octadecadienoate + glutathione disulfide + H2O. The catalysed reaction is (13S)-hydroperoxy-(9Z,11E)-octadecadienoate + 2 glutathione = (13S)-hydroxy-(9Z,11E)-octadecadienoate + glutathione disulfide + H2O. It carries out the reaction (5S)-hydroperoxy-(6E,8Z,11Z,14Z)-eicosatetraenoate + 2 glutathione = (5S)-hydroxy-(6E,8Z,11Z,14Z)-eicosatetraenoate + glutathione disulfide + H2O. It catalyses the reaction (12R)-hydroperoxy-(5Z,8Z,10E,14Z)-eicosatetraenoate + 2 glutathione = (12R)-hydroxy-(5Z,8Z,10E,14Z)-eicosatetraenoate + glutathione disulfide + H2O. The enzyme catalyses (12S)-hydroperoxy-(5Z,8Z,10E,14Z)-eicosatetraenoate + 2 glutathione = (12S)-hydroxy-(5Z,8Z,10E,14Z)-eicosatetraenoate + glutathione disulfide + H2O. The catalysed reaction is (15S)-hydroperoxy-(5Z,8Z,11Z,13E)-eicosatetraenoate + 2 glutathione = (15S)-hydroxy-(5Z,8Z,11Z,13E)-eicosatetraenoate + glutathione disulfide + H2O. It carries out the reaction (5S)-hydroperoxy-(6E,8Z,11Z,14Z,17Z)-eicosapentaenoate + 2 glutathione = (5S)-hydroxy-(6E,8Z,11Z,14Z,17Z)-eicosapentaenoate + glutathione disulfide + H2O. It catalyses the reaction (12S)-hydroperoxy-(5Z,8Z,10E,14Z,17Z)-eicosapentaenoate + 2 glutathione = (12S)-hydroxy-(5Z,8Z,10E,14Z,17Z)-eicosapentaenoate + glutathione disulfide + H2O. The enzyme catalyses (15S)-hydroperoxy-(5Z,8Z,11Z,13E,17Z)-eicosapentaenoate + 2 glutathione = (15S)-hydroxy-(5Z,8Z,11Z,13E,17Z)-eicosapentaenoate + glutathione disulfide + H2O. The catalysed reaction is (15S)-hydroperoxy-(11Z,13E)-eicosadienoate + 2 glutathione = (15S)-hydroxy-(11Z,13E)-eicosadienoate + glutathione disulfide + H2O. It carries out the reaction (17S)-hydroperoxy-(4Z,7Z,10Z,13Z,15E,19Z)-docosahexaenoate + 2 glutathione = (17S)-hydroxy-(4Z,7Z,10Z,13Z,15E,19Z)-docosahexaenoate + glutathione disulfide + H2O. It catalyses the reaction a hydroperoxy-1,2-diacyl-glycero-3-phosphocholine + 2 glutathione = a hydroxy-1,2-diacyl-glycero-3-phosphocholine + glutathione disulfide + H2O. Its function is as follows. Essential antioxidant peroxidase that directly reduces phospholipid hydroperoxide even if they are incorporated in membranes and lipoproteins. Can also reduce fatty acid hydroperoxide, cholesterol hydroperoxide and thymine hydroperoxide. Plays a key role in protecting cells from oxidative damage by preventing membrane lipid peroxidation. Required to prevent cells from ferroptosis, a non-apoptotic cell death resulting from an iron-dependent accumulation of lipid reactive oxygen species. The presence of selenocysteine (Sec) versus Cys at the active site is essential for life: it provides resistance to overoxidation and prevents cells against ferroptosis. The presence of Sec at the active site is also essential for the survival of a specific type of parvalbumin-positive interneurons, thereby preventing against fatal epileptic seizures. May be required to protect cells from the toxicity of ingested lipid hydroperoxides. Required for normal sperm development and male fertility. Essential for maturation and survival of photoreceptor cells. Plays a role in a primary T-cell response to viral and parasitic infection by protecting T-cells from ferroptosis and by supporting T-cell expansion. Plays a role of glutathione peroxidase in platelets in the arachidonic acid metabolism. Reduces hydroperoxy ester lipids formed by a 15-lipoxygenase that may play a role as down-regulator of the cellular 15-lipoxygenase pathway. Can also reduce small soluble hydroperoxides such as H2O2, cumene hydroperoxide and tert-butyl hydroperoxide. This chain is Phospholipid hydroperoxide glutathione peroxidase, found in Macaca fuscata fuscata (Japanese macaque).